A 464-amino-acid chain; its full sequence is Chaperone SurA (464 aa).

Positions 1-25 are cleaved as a signal peptide; that stretch reads MTRYFSIVLSLLLAVSCVFLPVASA. 2 consecutive PpiC domains span residues 175-277 and 292-391; these read GAQY…KLVE and ATEY…QRLG. The tract at residues 439–464 is disordered; sequence PADDHQTPSAAVIPATGAVLPSATKH.

It localises to the periplasm. The catalysed reaction is [protein]-peptidylproline (omega=180) = [protein]-peptidylproline (omega=0). Its function is as follows. Chaperone involved in the correct folding and assembly of outer membrane proteins. Recognizes specific patterns of aromatic residues and the orientation of their side chains, which are found more frequently in integral outer membrane proteins. May act in both early periplasmic and late outer membrane-associated steps of protein maturation. The sequence is that of Chaperone SurA from Xylella fastidiosa (strain 9a5c).